The following is a 140-amino-acid chain: Pro-vaccinia growth factor (140 aa).

The signal sequence occupies residues 1-18 (MLINYLMLLFAAMIIRSF). Topologically, residues 19–100 (ADSGNAIETT…SEKPNTTTSY (82 aa)) are extracellular. Asn34 is a glycosylation site (N-linked (GlcNAc...) asparagine; by host). Positions 41 to 81 (AIRLCGPEGDGYCLHGDCIHARDIDGMYCRCSHGYTGIRCQ) constitute an EGF-like domain. 3 cysteine pairs are disulfide-bonded: Cys45–Cys58, Cys53–Cys69, and Cys71–Cys80. The N-linked (GlcNAc...) asparagine; by host glycan is linked to Asn95. The helical transmembrane segment at 101-121 (IPSPGIMLVLVGIIIITCCLL) threads the bilayer. Residues 122-140 (SVYRFTRRTKLPIQDMVVP) are Cytoplasmic-facing.

This sequence belongs to the orthopoxvirus OPG019 family. Interacts with host EGFR.

The protein localises to the host membrane. It localises to the secreted. In terms of biological role, stimulates cellular proliferation (hyperplasia)and mobility around infected cells to promote rapid and efficient spread of infection. This effect is beneficial for virus replication in vivo, because poxviruses replicate possibly better in proliferating cells than in quiescent cells. Acts by binding host EGFR, inducing its dimerization, autophosphorylation and leading to activation of several cellular pathways regulating cell proliferation or cell survival. The activation by host EGFR of mitogen activated protein kinases (MAPK) and extracellular-signal regulated kinases (ERK) are essential for the positive effect of vaccinia growth factor on poxvirus virulence in vivo. The sequence is that of Pro-vaccinia growth factor (OPG019) from Homo sapiens (Human).